A 340-amino-acid chain; its full sequence is Lipopolysaccharide heptosyltransferase 3 (340 aa).

Belongs to the glycosyltransferase 9 family.

The catalysed reaction is an L-alpha-D-Hep-(1-&gt;3)-4-O-phospho-L-alpha-D-Hep-(1-&gt;5)-[alpha-Kdo-(2-&gt;4)]-alpha-Kdo-(2-&gt;6)-lipid A + ADP-L-glycero-beta-D-manno-heptose = an L-alpha-D-Hep-(1-&gt;7)-L-alpha-D-Hep-(1-&gt;3)-4-O-phospho-L-alpha-D-Hep-(1-&gt;5)-[alpha-Kdo-(2-&gt;4)]-alpha-Kdo-(2-&gt;6)-lipid A + ADP + H(+). The enzyme catalyses L-alpha-D-Hep-(1-&gt;3)-4-O-phospho-L-alpha-D-Hep-(1-&gt;5)-[alpha-Kdo-(2-&gt;4)]-alpha-Kdo-(2-&gt;6)-lipid A (E. coli) + ADP-L-glycero-beta-D-manno-heptose = L-alpha-D-Hep-(1-&gt;7)-L-alpha-D-Hep-(1-&gt;3)-4-O-phospho-L-alpha-D-Hep-(1-&gt;5)-[alpha-Kdo-(2-&gt;4)]-alpha-Kdo-(2-&gt;6)-lipid A (E. coli) + ADP + H(+). It participates in bacterial outer membrane biogenesis; LPS core biosynthesis. Functionally, glycosyltransferase involved in the biosynthesis of the core oligosaccharide region of lipopolysaccharide (LPS). Catalyzes the addition of the third heptose unit (HepIII) to the second heptose unit (HepII) of the phospho-Hep2-Kdo2-lipid A module. The transfer of HepIII seems to be a prerequisite to the phosphorylation of the second heptose unit. This is Lipopolysaccharide heptosyltransferase 3 from Escherichia coli.